The following is a 426-amino-acid chain: PI-PLC X domain-containing protein At5g67130 (426 aa).

Positions 1-28 (MSACINGLCRAVTVSLLLLLLSFSFSSA) are cleaved as a signal peptide. The PI-PLC X-box domain maps to 76–232 (IINGLPFNKY…MVQENHRLLV (157 aa)). N-linked (GlcNAc...) asparagine glycosylation is found at N151 and N255. Residues 258–277 (GDPGVKRGSCPNRKESQPLN) form a disordered region. N370 is a glycosylation site (N-linked (GlcNAc...) asparagine). S404 carries the GPI-anchor amidated serine lipid modification. Positions 405–426 (VAQLNNIVVFCFSLLPLLIFLL) are cleaved as a propeptide — removed in mature form.

It localises to the cell membrane. This is PI-PLC X domain-containing protein At5g67130 from Arabidopsis thaliana (Mouse-ear cress).